The sequence spans 644 residues: Fidgetin-like protein 2 (644 aa).

2 disordered regions span residues M1 to P36 and A285 to G323. Polar residues predominate over residues P10–S27. Residues A285 to A294 show a composition bias toward low complexity. ATP is bound by residues A390 and G430–L435.

This sequence belongs to the AAA ATPase family. Mg(2+) serves as cofactor.

It is found in the cytoplasm. Its subcellular location is the cell cortex. It carries out the reaction ATP + H2O = ADP + phosphate + H(+). Functionally, microtubule-severing enzyme that negatively regulates cell migration and wound healing. In migrating cells, targets dynamic microtubules (MTs) at the leading edge and severs them, thereby suppressing motility. Microtubule severing releases ARHGEF2 which activates RHOA, which in turn regulates focal ahesion turnover via focal adhesion kinase, as opposed to F-actin polymerization, to suppress cell motility. Negative regulator of axon regeneration that suppresses axonal growth by selectively severing dynamic MTs in the distal axon shaft and growth cone. Contributes to proper cell branching during endothelial and neuronal development. The sequence is that of Fidgetin-like protein 2 (Fignl2) from Mus musculus (Mouse).